The sequence spans 155 residues: MSRRGTAEEKTAKSDPIYRNRLVNMLVNRILKHGKKSLAYQILYRAMKKIQQKTETNPLSVLRQAIRGVTPDIAVKARRVGGSTHQVPIEIGSTQGKALAIRWLLGASRKRPGRNMAFKLSSELVDAAKGSGDAIRKKEETHRMAEANRAFAHFR.

Belongs to the universal ribosomal protein uS7 family. In terms of assembly, part of the 30S ribosomal subunit.

It is found in the plastid. The protein localises to the chloroplast. Its function is as follows. One of the primary rRNA binding proteins, it binds directly to 16S rRNA where it nucleates assembly of the head domain of the 30S subunit. This Euonymus alatus (Burning bush) protein is Small ribosomal subunit protein uS7c (rps7).